Here is a 1178-residue protein sequence, read N- to C-terminus: Tricalbin-2 (1178 aa).

Polar residues predominate over residues 1-17; that stretch reads MSPNSSKTRTDQISSMP. The interval 1 to 27 is disordered; that stretch reads MSPNSSKTRTDQISSMPGINEATKVES. The Cytoplasmic segment spans residues 1-98; sequence MSPNSSKTRT…NLLPDKFYGD (98 aa). A helical transmembrane segment spans residues 99–119; that stretch reads WYHEVAILIIAGLCSFVLGYF. Lys120 is a topological domain (extracellular). Residues 121–141 traverse the membrane as a helical segment; that stretch reads FSLASVLIVMLTTGMLYRTSS. At 142 to 1178 the chain is on the cytoplasmic side; the sequence is KKYRESLRDL…TGDKKSEEKQ (1037 aa). Residues 164 to 367 enclose the SMP-LTD domain; the sequence is DYESVEWLNT…PPFSLQLNIP (204 aa). 3 C2 domains span residues 358 to 481, 504 to 628, and 632 to 749; these read PPFS…EKVH, PKKL…LKVT, and RPVD…DKYT. A coiled-coil region spans residues 784–821; the sequence is LSLEEAKEVDEINEKKDKLEKQKSTLDDKNISKEEKER. Positions 962–1086 constitute a C2 4 domain; sequence QVSWFPVTAT…DPESDTTFNI (125 aa). A Phosphoserine modification is found at Ser991.

The protein belongs to the tricalbin family. Interacts with TCB1 and TCB3 via its C-terminal domain.

The protein resides in the cell membrane. It is found in the endoplasmic reticulum membrane. In terms of biological role, may play a role in membrane trafficking. This is Tricalbin-2 (TCB2) from Saccharomyces cerevisiae (strain ATCC 204508 / S288c) (Baker's yeast).